The chain runs to 511 residues: 2,3-bisphosphoglycerate-independent phosphoglycerate mutase (511 aa).

Residues Asp14 and Ser64 each contribute to the Mn(2+) site. The active-site Phosphoserine intermediate is Ser64. Substrate-binding positions include His125, 155–156 (RD), Arg187, Arg193, 259–262 (RADR), and Lys333. Positions 400, 404, 441, 442, and 460 each coordinate Mn(2+).

It belongs to the BPG-independent phosphoglycerate mutase family. In terms of assembly, monomer. Mn(2+) is required as a cofactor.

It catalyses the reaction (2R)-2-phosphoglycerate = (2R)-3-phosphoglycerate. It functions in the pathway carbohydrate degradation; glycolysis; pyruvate from D-glyceraldehyde 3-phosphate: step 3/5. In terms of biological role, catalyzes the interconversion of 2-phosphoglycerate and 3-phosphoglycerate. This is 2,3-bisphosphoglycerate-independent phosphoglycerate mutase from Pseudomonas entomophila (strain L48).